Here is a 596-residue protein sequence, read N- to C-terminus: Aspartate--tRNA(Asp/Asn) ligase (596 aa).

E175 provides a ligand contact to L-aspartate. Positions 199 to 202 are aspartate; it reads QQYK. L-aspartate contacts are provided by R221 and H454. 221–223 provides a ligand contact to ATP; the sequence is RDE. Residue E488 coordinates ATP. An L-aspartate-binding site is contributed by R495. 540–543 contacts ATP; that stretch reads GIDR.

This sequence belongs to the class-II aminoacyl-tRNA synthetase family. Type 1 subfamily. In terms of assembly, homodimer.

It localises to the cytoplasm. The enzyme catalyses tRNA(Asx) + L-aspartate + ATP = L-aspartyl-tRNA(Asx) + AMP + diphosphate. Functionally, aspartyl-tRNA synthetase with relaxed tRNA specificity since it is able to aspartylate not only its cognate tRNA(Asp) but also tRNA(Asn). Reaction proceeds in two steps: L-aspartate is first activated by ATP to form Asp-AMP and then transferred to the acceptor end of tRNA(Asp/Asn). The polypeptide is Aspartate--tRNA(Asp/Asn) ligase (Rhizobium leguminosarum bv. trifolii (strain WSM2304)).